Reading from the N-terminus, the 543-residue chain is Light-independent protochlorophyllide reductase subunit B (543 aa).

Residue aspartate 36 participates in [4Fe-4S] cluster binding. Residue aspartate 287 is the Proton donor of the active site. 422–423 (GL) contacts substrate.

The protein belongs to the ChlB/BchB/BchZ family. As to quaternary structure, protochlorophyllide reductase is composed of three subunits; BchL, BchN and BchB. Forms a heterotetramer of two BchB and two BchN subunits. [4Fe-4S] cluster is required as a cofactor.

The catalysed reaction is chlorophyllide a + oxidized 2[4Fe-4S]-[ferredoxin] + 2 ADP + 2 phosphate = protochlorophyllide a + reduced 2[4Fe-4S]-[ferredoxin] + 2 ATP + 2 H2O. Its pathway is porphyrin-containing compound metabolism; bacteriochlorophyll biosynthesis (light-independent). Its function is as follows. Component of the dark-operative protochlorophyllide reductase (DPOR) that uses Mg-ATP and reduced ferredoxin to reduce ring D of protochlorophyllide (Pchlide) to form chlorophyllide a (Chlide). This reaction is light-independent. The NB-protein (BchN-BchB) is the catalytic component of the complex. This chain is Light-independent protochlorophyllide reductase subunit B, found in Rubrivivax gelatinosus (strain NBRC 100245 / IL144).